We begin with the raw amino-acid sequence, 296 residues long: NAD kinase (296 aa).

Aspartate 73 serves as the catalytic Proton acceptor. Residues 73 to 74 (DG), lysine 78, 151 to 152 (NE), arginine 178, aspartate 180, and 191 to 196 (TAHAMS) contribute to the NAD(+) site.

The protein belongs to the NAD kinase family. It depends on a divalent metal cation as a cofactor.

The protein resides in the cytoplasm. The catalysed reaction is NAD(+) + ATP = ADP + NADP(+) + H(+). Functionally, involved in the regulation of the intracellular balance of NAD and NADP, and is a key enzyme in the biosynthesis of NADP. Catalyzes specifically the phosphorylation on 2'-hydroxyl of the adenosine moiety of NAD to yield NADP. The sequence is that of NAD kinase from Francisella tularensis subsp. tularensis (strain WY96-3418).